Reading from the N-terminus, the 169-residue chain is Shikimate kinase (169 aa).

Residue 13-18 participates in ATP binding; sequence GAGKST. Serine 17 is a binding site for Mg(2+). Aspartate 35, arginine 59, and glycine 80 together coordinate substrate. Arginine 117 provides a ligand contact to ATP. Substrate is bound at residue arginine 136. Arginine 153 contacts ATP.

This sequence belongs to the shikimate kinase family. In terms of assembly, monomer. Mg(2+) serves as cofactor.

It localises to the cytoplasm. The catalysed reaction is shikimate + ATP = 3-phosphoshikimate + ADP + H(+). Its pathway is metabolic intermediate biosynthesis; chorismate biosynthesis; chorismate from D-erythrose 4-phosphate and phosphoenolpyruvate: step 5/7. Catalyzes the specific phosphorylation of the 3-hydroxyl group of shikimic acid using ATP as a cosubstrate. The sequence is that of Shikimate kinase from Corynebacterium glutamicum (strain ATCC 13032 / DSM 20300 / JCM 1318 / BCRC 11384 / CCUG 27702 / LMG 3730 / NBRC 12168 / NCIMB 10025 / NRRL B-2784 / 534).